The chain runs to 141 residues: Alpha-lactalbumin (141 aa).

The signal sequence occupies residues 1–19 (MMPLVPLLLVSIVFPGIQA). Residues 20 to 141 (TQLTRCELTE…ENLEQWVCKK (122 aa)) enclose the C-type lysozyme domain. 4 disulfide bridges follow: Cys-25-Cys-139, Cys-47-Cys-130, Cys-80-Cys-96, and Cys-92-Cys-110. Residue Asn-64 is glycosylated (N-linked (GlcNAc...) asparagine). Positions 101, 106, and 107 each coordinate Ca(2+).

Belongs to the glycosyl hydrolase 22 family. Lactose synthase (LS) is a heterodimer of a catalytic component, beta1,4-galactosyltransferase (beta4Gal-T1) and a regulatory component, alpha-lactalbumin (LA). Mammary gland specific. Secreted in milk.

The protein localises to the secreted. Functionally, regulatory subunit of lactose synthase, changes the substrate specificity of galactosyltransferase in the mammary gland making glucose a good acceptor substrate for this enzyme. This enables LS to synthesize lactose, the major carbohydrate component of milk. In other tissues, galactosyltransferase transfers galactose onto the N-acetylglucosamine of the oligosaccharide chains in glycoproteins. In Oryctolagus cuniculus (Rabbit), this protein is Alpha-lactalbumin (LALBA).